The chain runs to 577 residues: Chaperonin CPN60, mitochondrial (577 aa).

The N-terminal 31 residues, 1-31 (MYRFASNLASKARIAQNARQVSSRMSWSRNY), are a transit peptide targeting the mitochondrion. Ser-151 carries the phosphoserine modification.

The protein belongs to the chaperonin (HSP60) family.

It localises to the mitochondrion. Functionally, implicated in mitochondrial protein import and macromolecular assembly. May facilitate the correct folding of imported proteins. May also prevent misfolding and promote the refolding and proper assembly of unfolded polypeptides generated under stress conditions in the mitochondrial matrix. In Arabidopsis thaliana (Mouse-ear cress), this protein is Chaperonin CPN60, mitochondrial (CPN60).